A 301-amino-acid chain; its full sequence is MRSEGDTWDITTSVGSTALFVATARALEAQKPDPLAVDPYAEIFCRAVGGTAADVLDGKDPDHQLKTTDFGENFVNFQGARTRYFDNYFARTADAGVRQVVVLAAGLDSRAYRLDWPAATTIFELDQPQVLDFKREVLARAGAQPRAERREIAIDLREDWPQALRDSGFDPAKPSAWIAEGLLIYLPASAQEQLFTGIDGLAGHGSHVAVEDGAPMKPEDFETAVAEERAATAQGDQRVFFQLVYNEQCAPATEWFGNRGWTAVGTPLADYLREVGRPVPGPETEAGPMIARNTLVSAVRA.

S-adenosyl-L-methionine-binding positions include Asp-126 and 155–156; that span reads DL.

Belongs to the UPF0677 family.

Functionally, exhibits S-adenosyl-L-methionine-dependent methyltransferase activity. This chain is Putative S-adenosyl-L-methionine-dependent methyltransferase MAP_3777, found in Mycolicibacterium paratuberculosis (strain ATCC BAA-968 / K-10) (Mycobacterium paratuberculosis).